Here is a 213-residue protein sequence, read N- to C-terminus: dITP/XTP pyrophosphatase (213 aa).

17-22 (SNNAGK) is a binding site for substrate. Asp-78 serves as the catalytic Proton acceptor. Mg(2+) is bound at residue Asp-78. Residues Ser-79, 164-167 (FGYD), Lys-187, and 192-193 (HR) each bind substrate.

The protein belongs to the HAM1 NTPase family. Homodimer. Mg(2+) serves as cofactor.

The catalysed reaction is XTP + H2O = XMP + diphosphate + H(+). It carries out the reaction dITP + H2O = dIMP + diphosphate + H(+). The enzyme catalyses ITP + H2O = IMP + diphosphate + H(+). Pyrophosphatase that catalyzes the hydrolysis of nucleoside triphosphates to their monophosphate derivatives, with a high preference for the non-canonical purine nucleotides XTP (xanthosine triphosphate), dITP (deoxyinosine triphosphate) and ITP. Seems to function as a house-cleaning enzyme that removes non-canonical purine nucleotides from the nucleotide pool, thus preventing their incorporation into DNA/RNA and avoiding chromosomal lesions. This Bordetella parapertussis (strain 12822 / ATCC BAA-587 / NCTC 13253) protein is dITP/XTP pyrophosphatase.